The chain runs to 457 residues: MQKYFVEARQLLALAIPVILAQVAQTAMGFVDTVMAGGYSATDMAAVAIGTSIWLPAILFGHGLLLALTPVVAQLNGSGRRERIAPQVRQGFWLAGFVSVLIMVVLWNAGYIISSMHNIDPLLAEKAVGYLRALLWGAPGYLFFQVARNQCEGLAKTKPGMVMGFIGLLVNIPVNYIFIYGHFGMPELGGVGCGVATASVYWVMFASMLWWVRRARTMRDIRCAERFSGPDFAVLLRLVQLGLPIALALFFEVTLFAVVALLVSPLGIIDVAGHQIALNFSSLMFVLPLSLAAAVTIRVGFRLGQGSTIDAQVSARTGVGVGVCLAVFTAIFTVLMRKQIALLYNDNPEVVTLASHLMLLAAIYQISDSIQVIGSGILRGYKDTRSIFFITFTAYWVLGLPSGYLLALTDMIVPRMGPAGFWCGFIIGLTSAAIMMMLRMRFLQRQPSSIILQRAAR.

Helical transmembrane passes span L11–V31, I53–A73, W93–I113, A127–A147, G160–Y180, V191–W211, L243–V263, I276–T296, R316–M336, L357–I377, I387–A407, and P418–L438.

The protein belongs to the multi antimicrobial extrusion (MATE) (TC 2.A.66.1) family. MdtK subfamily.

Its subcellular location is the cell inner membrane. Multidrug efflux pump that functions probably as a Na(+)/drug antiporter. The protein is Multidrug resistance protein MdtK of Klebsiella pneumoniae subsp. pneumoniae (strain ATCC 700721 / MGH 78578).